A 277-amino-acid chain; its full sequence is Putative phosphoenolpyruvate synthase regulatory protein (277 aa).

157–164 (GVSRCGKT) contributes to the ADP binding site.

It belongs to the pyruvate, phosphate/water dikinase regulatory protein family. PSRP subfamily.

It carries out the reaction [pyruvate, water dikinase] + ADP = [pyruvate, water dikinase]-phosphate + AMP + H(+). The catalysed reaction is [pyruvate, water dikinase]-phosphate + phosphate + H(+) = [pyruvate, water dikinase] + diphosphate. Its function is as follows. Bifunctional serine/threonine kinase and phosphorylase involved in the regulation of the phosphoenolpyruvate synthase (PEPS) by catalyzing its phosphorylation/dephosphorylation. This chain is Putative phosphoenolpyruvate synthase regulatory protein, found in Photobacterium profundum (strain SS9).